Reading from the N-terminus, the 300-residue chain is Acetaldehyde dehydrogenase 1 (300 aa).

11 to 14 (SGNI) serves as a coordination point for NAD(+). Catalysis depends on C126, which acts as the Acyl-thioester intermediate. NAD(+) is bound by residues 157–165 (SAGPGTRAN) and N276.

Belongs to the acetaldehyde dehydrogenase family.

The catalysed reaction is acetaldehyde + NAD(+) + CoA = acetyl-CoA + NADH + H(+). The sequence is that of Acetaldehyde dehydrogenase 1 from Rhodococcus erythropolis (strain PR4 / NBRC 100887).